The chain runs to 485 residues: MASAAEGDMEAELTRGLLWGFQDLSLNKLATSLGASEQALRLIISIFLGYPFALFYRRYLFYKDSYLIHLFHTFTGLSIAYYNFGTQLYHSLLCIVLQFLILRLMGRTITAVLTTFCVQMGYLLAGYYNTATGTYDIKWTMPHCVLTLKLIGLAMDYYDGGKDQKSLTSEQQIYAIWGVPSLLEISGFSYFYGAFLVGPQFSMNHYMKLVRGELTDVPGKIPNSTIPALRRLALGLVYLVGYTLLSPHITEDYLLSDDYENGSFWFRCMYMLIWGKFVLYKYVTCWLVTEGVCILTGLGFNGLDEYGTAKWDACANMKVWLFETTPRFTGTIASFNINTNAWVARYFFKRLKFLGNKVLSQGLSLLFLALWHGLHSGYLVCFQMEFLIVIVERQAASLIRDSPVLSRLASITVLQPLYYLAQQTIHWLFMGYSMTAFCLFTWDKWMKVYKSIYFLGHVFFLSLLFILPYVRKVMVPRKEKLKKME.

At A2 the chain carries N-acetylalanine. The next 7 helical transmembrane spans lie at 35–55 (ASEQ…FALF), 82–102 (YNFG…FLIL), 108–128 (TITA…AGYY), 139–158 (WTMP…MDYY), 176–196 (IWGV…GAFL), 232–252 (LALG…ITED), and 283–303 (VTCW…FNGL). Catalysis depends on residues N336 and H372. Transmembrane regions (helical) follow at residues 362–382 (GLSL…LVCF), 420–440 (LAQQ…FCLF), and 448–468 (VYKS…FILP). The short motif at 482–485 (KKME) is the Di-lysine motif element.

The protein belongs to the membrane-bound acyltransferase family.

The protein localises to the endoplasmic reticulum membrane. It carries out the reaction a 1-acyl-sn-glycero-3-phosphocholine + an acyl-CoA = a 1,2-diacyl-sn-glycero-3-phosphocholine + CoA. It catalyses the reaction a 1-acyl-sn-glycero-3-phosphoethanolamine + an acyl-CoA = a 1,2-diacyl-sn-glycero-3-phosphoethanolamine + CoA. The enzyme catalyses a 1-acyl-sn-glycero-3-phospho-L-serine + an acyl-CoA = a 1,2-diacyl-sn-glycero-3-phospho-L-serine + CoA. The catalysed reaction is (9Z,12Z)-octadecadienoyl-CoA + a 1-acyl-sn-glycero-3-phosphocholine = 1-acyl-2-(9Z,12Z)-octadecadienoyl-sn-glycero-3-phosphocholine + CoA. It carries out the reaction (5Z,8Z,11Z,14Z)-eicosatetraenoyl-CoA + a 1-acyl-sn-glycero-3-phosphocholine = 1-acyl-2-(5Z,8Z,11Z,14Z-eicosatetraenoyl)-sn-glycero-3-phosphocholine + CoA. It catalyses the reaction dodecanoyl-CoA + 1-hexadecanoyl-sn-glycero-3-phosphocholine = 1-hexadecanoyl-2-dodecanoyl-sn-glycero-3-phosphocholine + CoA. The enzyme catalyses octadecanoyl-CoA + 1-hexadecanoyl-sn-glycero-3-phosphocholine = 1-hexadecanoyl-2-octadecanoyl-sn-glycero-3-phosphocholine + CoA. The catalysed reaction is 1-dodecanoyl-sn-glycero-3-phosphocholine + hexadecanoyl-CoA = 1-dodecanoyl-2-hexadecanoyl-sn-glycero-3-phosphocholine + CoA. It carries out the reaction 1-tetradecanoyl-sn-glycero-3-phosphocholine + hexadecanoyl-CoA = 1-tetradecanoyl-2-hexadecanoyl-sn-glycero-3-phosphocholine + CoA. It catalyses the reaction 1-hexadecanoyl-sn-glycero-3-phosphocholine + hexadecanoyl-CoA = 1,2-dihexadecanoyl-sn-glycero-3-phosphocholine + CoA. The enzyme catalyses 1-octadecanoyl-sn-glycero-3-phosphocholine + hexadecanoyl-CoA = 1-octadecanoyl-2-hexadecanoyl-sn-glycero-3-phosphocholine + CoA. The catalysed reaction is 1-(9Z-octadecenoyl)-sn-glycero-3-phosphocholine + hexadecanoyl-CoA = 1-(9Z-octadecenoyl)-2-hexadecanoyl-sn-glycero-3-phosphocholine + CoA. It carries out the reaction (9Z)-hexadecenoyl-CoA + 1-hexadecanoyl-sn-glycero-3-phosphocholine = 1-hexadecanoyl-2-(9Z-hexadecenoyl)-sn-glycero-3-phosphocholine + CoA. It catalyses the reaction 1-hexadecanoyl-sn-glycero-3-phosphocholine + (9Z)-octadecenoyl-CoA = 1-hexadecanoyl-2-(9Z-octadecenoyl)-sn-glycero-3-phosphocholine + CoA. The enzyme catalyses (9Z,12Z)-octadecadienoyl-CoA + 1-hexadecanoyl-sn-glycero-3-phosphocholine = 1-hexadecanoyl-2-(9Z,12Z-octadecadienoyl)-sn-glycero-3-phosphocholine + CoA. The catalysed reaction is 1-dodecanoyl-sn-glycero-3-phosphocholine + (5Z,8Z,11Z,14Z)-eicosatetraenoyl-CoA = 1-dodecanoyl-2-(5Z,8Z,11Z,14Z)-eicosatetraenoyl-sn-glycero-3-phosphocholine + CoA. It carries out the reaction (5Z,8Z,11Z,14Z)-eicosatetraenoyl-CoA + 1-hexadecanoyl-sn-glycero-3-phosphocholine = 1-hexadecanoyl-2-(5Z,8Z,11Z,14Z-eicosatetraenoyl)-sn-glycero-3-phosphocholine + CoA. It catalyses the reaction 1-octadecanoyl-sn-glycero-3-phosphocholine + (5Z,8Z,11Z,14Z)-eicosatetraenoyl-CoA = 1-octadecanoyl-2-(5Z,8Z,11Z,14Z-eicosatetraenoyl)-sn-glycero-3-phosphocholine + CoA. The enzyme catalyses 1-eicosanoyl-sn-glycero-3-phosphocholine + (5Z,8Z,11Z,14Z)-eicosatetraenoyl-CoA = 1-eicosanoyl-2-(5Z,8Z,11Z,14Z)-eicosatetraenoyl-sn-glycero-3-phosphocholine + CoA. The catalysed reaction is 1-(9Z-octadecenoyl)-sn-glycero-3-phosphocholine + (9Z)-octadecenoyl-CoA = 1,2-di-(9Z-octadecenoyl)-sn-glycero-3-phosphocholine + CoA. It carries out the reaction 1-(9Z-octadecenoyl)-sn-glycero-3-phosphocholine + (9Z,12Z)-octadecadienoyl-CoA = 1-(9Z)-octadecenoyl-2-(9Z,12Z)-octadecadienoyl-sn-glycero-3-phosphocholine + CoA. It catalyses the reaction 1-(9Z-octadecenoyl)-sn-glycero-3-phosphocholine + (5Z,8Z,11Z,14Z)-eicosatetraenoyl-CoA = 1-(9Z)-octadecenoyl-2-(5Z,8Z,11Z,14Z)-icosatetraenoyl-sn-glycero-3-phosphocholine + CoA. The enzyme catalyses a 1-acyl-sn-glycero-3-phosphoethanolamine + (9Z,12Z)-octadecadienoyl-CoA = 1-acyl-2-(9Z,12Z)-octadecadienoyl-sn-glycero-3-phosphoethanolamine + CoA. The catalysed reaction is 1-(9Z-octadecenoyl)-sn-glycero-3-phosphoethanolamine + (9Z,12Z)-octadecadienoyl-CoA = 1-(9Z)-octadecenoyl-2-(9Z,12Z)-octadecadienoyl-sn-glycero-3-phosphoethanolamine + CoA. It carries out the reaction 1-(10Z-heptadecenoyl)-sn-glycero-3-phosphoethanolamine + (9Z,12Z)-octadecadienoyl-CoA = 1-(10Z-heptadecenoyl)-2-(9Z,12Z-octadecadienoyl)-sn-glycero-3-phosphoethanolamine + CoA. It catalyses the reaction a 1-acyl-sn-glycero-3-phosphoethanolamine + (5Z,8Z,11Z,14Z)-eicosatetraenoyl-CoA = 1-acyl-2-(5Z,8Z,11Z,14Z)-eicosatetraenoyl-sn-glycero-3-phosphoethanolamine + CoA. The enzyme catalyses 1-hexadecanoyl-sn-glycero-3-phosphoethanolamine + (5Z,8Z,11Z,14Z)-eicosatetraenoyl-CoA = 1-hexadecanoyl-2-(5Z,8Z,11Z,14Z-eicosatetraenoyl)-sn-glycero-3-phosphoethanolamine + CoA. The catalysed reaction is 1-(9Z-octadecenoyl)-sn-glycero-3-phosphoethanolamine + (5Z,8Z,11Z,14Z)-eicosatetraenoyl-CoA = 1-(9Z)-octadecenoyl-2-(5Z,8Z,11Z,14Z)-eicosatetraenoyl-sn-glycero-3-phosphoethanolamine + CoA. It carries out the reaction 1-(10Z-heptadecenoyl)-sn-glycero-3-phosphoethanolamine + (5Z,8Z,11Z,14Z)-eicosatetraenoyl-CoA = 1-(10Z-heptadecenoyl)-2-(5Z,8Z,11Z,14Z-eicosatetraenoyl)-sn-glycero-3-phosphoethanolamine + CoA. It catalyses the reaction a 1-O-(1Z-alkenyl)-sn-glycero-3-phosphoethanolamine + (5Z,8Z,11Z,14Z)-eicosatetraenoyl-CoA = 1-O-(1Z)-alkenyl-2-(5Z,8Z,11Z,14Z)-eicosatetraenoyl-sn-glycero-3-phosphoethanolamine + CoA. The enzyme catalyses a 1-acyl-sn-glycero-3-phospho-L-serine + (9Z,12Z)-octadecadienoyl-CoA = 1-acyl-2-(9Z,12Z-octadecadienoyl)-sn-glycero-3-phospho-L-serine + CoA. The catalysed reaction is a 1-acyl-sn-glycero-3-phospho-L-serine + (5Z,8Z,11Z,14Z)-eicosatetraenoyl-CoA = 1-acyl-2-(5Z,8Z,11Z,14Z-eicosatetraenoyl)-sn-glycero-3-phospho-L-serine + CoA. It carries out the reaction 1-hexadecanoyl-sn-glycero-3-phospho-L-serine + (9Z)-octadecenoyl-CoA = 1-hexadecanoyl-2-(9Z-octadecenoyl)-sn-glycero-3-phospho-L-serine + CoA. It catalyses the reaction 1-(9Z-octadecenoyl)-sn-glycero-3-phospho-L-serine + (9Z)-octadecenoyl-CoA = 1,2-di-(9Z)-octadecenoyl-sn-glycero-3-phospho-L-serine + CoA. The enzyme catalyses 1-hexadecanoyl-sn-glycero-3-phospho-L-serine + (9Z,12Z)-octadecadienoyl-CoA = 1-hexadecanoyl-2-(9Z,12Z-octadecadienoyl)-sn-glycero-3-phospho-L-serine + CoA. The catalysed reaction is 1-(9Z-octadecenoyl)-sn-glycero-3-phospho-L-serine + (9Z,12Z)-octadecadienoyl-CoA = 1-(9Z-octadecenoyl)-2-(9Z,12Z-octadienoyl)-sn-glycero-3-phospho-L-serine + CoA. It carries out the reaction 1-hexadecanoyl-sn-glycero-3-phospho-L-serine + (5Z,8Z,11Z,14Z)-eicosatetraenoyl-CoA = 1-hexadecanoyl-2-(5Z,8Z,11Z,14Z-eicosatetraenoyl)-sn-glycero-3-phospho-L-serine + CoA. It catalyses the reaction 1-(9Z-octadecenoyl)-sn-glycero-3-phospho-L-serine + (5Z,8Z,11Z,14Z)-eicosatetraenoyl-CoA = 1-(9Z-octadecenoyl)-2-(5Z,8Z,11Z,14Z-eicosatetraenoyl)-sn-glycero-3-phospho-L-serine + CoA. It functions in the pathway lipid metabolism; phospholipid metabolism. Functionally, lysophospholipid O-acyltransferase (LPLAT) that catalyzes the reacylation step of the phospholipid remodeling process also known as the Lands cycle. Catalyzes transfer of the fatty acyl chain from fatty acyl-CoA to 1-acyl lysophospholipid to form various classes of phospholipids. Converts 1-acyl lysophosphatidylcholine (LPC) into phosphatidylcholine (PC) (LPCAT activity), 1-acyl lysophosphatidylserine (LPS) into phosphatidylserine (PS) (LPSAT activity) and 1-acyl lysophosphatidylethanolamine (LPE) into phosphatidylethanolamine (PE) (LPEAT activity). Favors polyunsaturated fatty acyl-CoAs as acyl donors compared to saturated fatty acyl-CoAs. Has higher activity for LPC acyl acceptors compared to LPEs and LPSs. Can also transfer the fatty acyl chain from fatty acyl-CoA to 1-O-alkyl lysophospholipid or 1-O-alkenyl lysophospholipid with lower efficiency. Acts as a major LPC O-acyltransferase in liver and intestine. As a component of the liver X receptor/NR1H3 or NR1H2 signaling pathway, mainly catalyzes the incorporation of arachidonate into PCs of endoplasmic reticulum (ER) membranes, increasing membrane dynamics and enabling triacylglycerols transfer to nascent very low-density lipoprotein (VLDL) particles. Promotes processing of sterol regulatory protein SREBF1 in hepatocytes, likely by facilitating the translocation of SREBF1-SCAP complex from ER to the Golgi apparatus. Participates in mechanisms by which the liver X receptor/NR1H3 or NR1H2 signaling pathway counteracts lipid-induced ER stress response and inflammation. Down-regulates hepatic inflammation by limiting arachidonic acid availability for synthesis of inflammatory eicosanoids, such as prostaglandins. In enterocytes, acts as a component of a gut-brain feedback loop that coordinates dietary lipid absorption and food intake. Regulates the abundance of PCs containing linoleate and arachidonate in enterocyte membranes, enabling passive diffusion of fatty acids and cholesterol across the membrane for efficient chylomicron assembly. In the intestinal crypt, acts as a component of dietary-responsive phospholipid-cholesterol axis, regulating the biosynthesis of cholesterol and its mitogenic effects on intestinal stem cells. The polypeptide is Lysophospholipid acyltransferase 5 (LPCAT3) (Bos taurus (Bovine)).